We begin with the raw amino-acid sequence, 88 residues long: Small ribosomal subunit protein uS17 (88 aa).

The protein belongs to the universal ribosomal protein uS17 family. In terms of assembly, part of the 30S ribosomal subunit.

One of the primary rRNA binding proteins, it binds specifically to the 5'-end of 16S ribosomal RNA. The protein is Small ribosomal subunit protein uS17 of Methylorubrum extorquens (strain PA1) (Methylobacterium extorquens).